A 480-amino-acid polypeptide reads, in one-letter code: Acyl-lipid (8-3)-desaturase (480 aa).

A disordered region spans residues 1 to 30 (MAPHSADTAGLVPSDELRLRTSNSKGPEQE). Residues 33–107 (LKKYTLEDVS…LAKYCIGELV (75 aa)) form the Cytochrome b5 heme-binding domain. Positions 68 and 90 each coordinate heme. A run of 2 helical transmembrane segments spans residues 151 to 171 (IHPH…ASYY) and 173 to 193 (AFFW…MGFF). The Histidine box-1 signature appears at 203–207 (HDGNH). Positions 238-243 (HVVGHH) match the Histidine box-2 motif. 3 helical membrane-spanning segments follow: residues 280 to 300 (IYLA…DDFL), 322 to 342 (IFFQ…SVYG), and 348 to 368 (TFLA…AFLF). The Histidine box-3 signature appears at 419 to 423 (QIEHH).

This sequence belongs to the fatty acid desaturase type 1 family. It depends on Fe(2+) as a cofactor.

It localises to the membrane. The enzyme catalyses an (8Z,11Z,14Z)-icosatrienoyl-containing glycerolipid + 2 Fe(II)-[cytochrome b5] + O2 + 2 H(+) = (5Z,8Z,11Z,14Z)-eicosatetraenoyl-containing glycerolipid + 2 Fe(III)-[cytochrome b5] + 2 H2O. It catalyses the reaction an (8Z,11Z,14Z,17Z)-eicosatetraenoyl-containing glycerolipid + 2 Fe(II)-[cytochrome b5] + O2 + 2 H(+) = a (5Z,8Z,11Z,14Z,17Z)-eicosapentaenoyl-containing glycerolipid + 2 Fe(III)-[cytochrome b5] + 2 H2O. Fatty acid desaturase that introduces a cis double bond at the 5-position in 20-carbon polyunsaturated fatty acids incorporated in a glycerolipid that contain a Delta(8) double bond. The sequence is that of Acyl-lipid (8-3)-desaturase from Physcomitrium patens (Spreading-leaved earth moss).